The chain runs to 701 residues: Glycine--tRNA ligase beta subunit (701 aa).

The protein belongs to the class-II aminoacyl-tRNA synthetase family. As to quaternary structure, tetramer of two alpha and two beta subunits.

The protein localises to the cytoplasm. The enzyme catalyses tRNA(Gly) + glycine + ATP = glycyl-tRNA(Gly) + AMP + diphosphate. This is Glycine--tRNA ligase beta subunit from Bradyrhizobium sp. (strain BTAi1 / ATCC BAA-1182).